Reading from the N-terminus, the 477-residue chain is MQVLHVCSEMFPLLKTGGLADVIGALPAAQIADGVDARVLLPAFPDIRRGVTDAQVVSRRDTFAGHITLLFGHYNGVGIYLIDAPHLYDRPGSPYHDTNLFAYTDNVLRFALLGWVGAEMASGLDPFWRPDVVHAHDWHAGLAPAYLAARGRPAKSVFTVHNLAYQGMFYAHHMNDIQLPWSFFNIHGLEFNGQISFLKAGLYYADHITAVSPTYAREITEPQFAYGMEGLLQQRHREGRLSGVLNGVDEKIWSPETDLLLASRYTRDTLEDKAENKSQLQIAMGLKVDDKVPLFAVVSRLTSQKGLDLVLEALPGLLEQGGQLALLGAGDPVLQEGFLAAAAEYPGQVGVQIGYHEAFSHRIMGGADVILVPSRFEPCGLTQLYGLKYGTLPLVRRTGGLADTVSDCSLENLADGVASGFVFEDSNAWSLLRAIRRAFVLWSRPSLWRFVQRQAMAMDFSWQVAAKSYRELYYRLK.

An ADP-alpha-D-glucose-binding site is contributed by K15.

It belongs to the glycosyltransferase 1 family. Bacterial/plant glycogen synthase subfamily.

The catalysed reaction is [(1-&gt;4)-alpha-D-glucosyl](n) + ADP-alpha-D-glucose = [(1-&gt;4)-alpha-D-glucosyl](n+1) + ADP + H(+). Its pathway is glycan biosynthesis; glycogen biosynthesis. Functionally, synthesizes alpha-1,4-glucan chains using ADP-glucose. The sequence is that of Glycogen synthase from Shigella flexneri serotype 5b (strain 8401).